Reading from the N-terminus, the 492-residue chain is MLDTGLLLVVILASLSVMFLVSLWQQKIRERLPPGPTPLPFIGNYLQLNMKDVYSSITQLSERYGPVFTIHLGPRRIVVLYGYDAVKEALVDQAEEFSGRGELPTFNILFKGYGFSLSNVEQAKRIRRFTIATLRDFGVGKRDVQECILEEAGYLIKTLQGTCGAPIDPSIYLSKTVSNVINSIVFGNRFDYEDKEFLSLLEMIDEMNIFAASATGQLYDMFHSVMKYLPGPQQQIIKVTQKLEDFMIEKVRQNHSTLDPNSPRNFIDSFLIRMQEEKYVNSEFHMNNLVMSSLGLLFAGTGSVSSTLYHGFLLLMKHPDVEAKVHEEIERVIGRNRQPQYEDHMKMPYTQAVINEIQRFSNLAPLGIPRRIIKNTTFRGFFLPKGTDVFPIIGSLMTEPKFFPNHKDFNPQHFLDDKGQLKKNAAFLPFSIGKRFCLGDSLAKMELFLLLTTILQNFRFKFPMNLEDINEYPSPIGFTRIIPNYTMSFMPI.

C437 provides a ligand contact to heme.

The protein belongs to the cytochrome P450 family. It depends on heme as a cofactor. Liver specific.

It is found in the endoplasmic reticulum membrane. Its subcellular location is the microsome membrane. It carries out the reaction an organic molecule + reduced [NADPH--hemoprotein reductase] + O2 = an alcohol + oxidized [NADPH--hemoprotein reductase] + H2O + H(+). Its function is as follows. Highly active in the 15-alpha-hydroxylation of testosterone. The protein is Cytochrome P450 2A2 (Cyp2a2) of Rattus norvegicus (Rat).